The chain runs to 107 residues: MAFEVSAEDQDRQLTLIDEDGNEELFEVLFTFHSDDNDKSYILLYPAAVEDDDEIEVQAFSYDADEDGDVTSSDLHEITSDAEWDMVQGVLNTFLEDDRLSGDDSAE.

Belongs to the UPF0473 family.

This chain is UPF0473 protein Ldb1604, found in Lactobacillus delbrueckii subsp. bulgaricus (strain ATCC 11842 / DSM 20081 / BCRC 10696 / JCM 1002 / NBRC 13953 / NCIMB 11778 / NCTC 12712 / WDCM 00102 / Lb 14).